Consider the following 147-residue polypeptide: RxLR effector protein Avr3a (147 aa).

The first 21 residues, 1–21 (MRLAIMLSATAVAINFATCSA), serve as a signal peptide directing secretion. Residues 44–59 (RLLRKNEENEETSEER) carry the RxLR-dEER motif. N6-acetyllysine is present on Lys48. Residues 77–147 (ALTKRADAKK…YMMHLGLTGY (71 aa)) form an effector domain region.

Belongs to the RxLR effector family. As to quaternary structure, forms homodimers via the RxLR-dEER motif. Interacts with host E3 ligase CMPG1. Interacts with host DRP2. In terms of processing, proteolytically cleaved. The cleavage site directly after the RxLR sequence and the high conservation among other effector proteins suggest that the RxLR motif might play a crucial role in the intracellular processing before secretion. Glycosylated. Post-translationally, N-acetylated at Lys-48 after cleavage.

The protein resides in the secreted. Its subcellular location is the host cytoplasm. The protein localises to the host endosome. In terms of biological role, multifunctional effector that can suppress host BAK1/SERK3-mediated immunity through at least two different pathways. Manipulates plant immunity by targeting and stabilizing host E3 ligase CMPG1. Preventing the normal 26S proteasome-dependent degradation of potato CMPG1, and thus potentially of its protein substrates in the host cell, further abolishes host cell death during the biotrophic phase of infection. Also associates with the dynamin-related protein 2 (DRP2), a plant GTPase involved in immune receptor-mediated endocytosis. The Avr3A(KI) form is recognized by R3a which triggers R3a-mediated hypersensitivity and suppresses INF1-induced cell death. This Phytophthora infestans (Potato late blight agent) protein is RxLR effector protein Avr3a.